We begin with the raw amino-acid sequence, 98 residues long: NADH-ubiquinone oxidoreductase chain 4L (98 aa).

A run of 3 helical transmembrane segments spans residues 1–21 (MSMVYANIFLAFIMSLMGLLM), 29–49 (SLLCLEGMMLSLFVMMTVTIL), and 61–81 (IILLVFAACEAALGLSLLVMV).

This sequence belongs to the complex I subunit 4L family. Core subunit of respiratory chain NADH dehydrogenase (Complex I) which is composed of 45 different subunits.

It localises to the mitochondrion inner membrane. It catalyses the reaction a ubiquinone + NADH + 5 H(+)(in) = a ubiquinol + NAD(+) + 4 H(+)(out). Functionally, core subunit of the mitochondrial membrane respiratory chain NADH dehydrogenase (Complex I) which catalyzes electron transfer from NADH through the respiratory chain, using ubiquinone as an electron acceptor. Part of the enzyme membrane arm which is embedded in the lipid bilayer and involved in proton translocation. The chain is NADH-ubiquinone oxidoreductase chain 4L (MT-ND4L) from Erignathus barbatus (Bearded seal).